The following is a 196-amino-acid chain: Probable nicotinate-nucleotide adenylyltransferase (196 aa).

The protein belongs to the NadD family.

It carries out the reaction nicotinate beta-D-ribonucleotide + ATP + H(+) = deamido-NAD(+) + diphosphate. It participates in cofactor biosynthesis; NAD(+) biosynthesis; deamido-NAD(+) from nicotinate D-ribonucleotide: step 1/1. Functionally, catalyzes the reversible adenylation of nicotinate mononucleotide (NaMN) to nicotinic acid adenine dinucleotide (NaAD). The polypeptide is Probable nicotinate-nucleotide adenylyltransferase (Thermotoga sp. (strain RQ2)).